Consider the following 222-residue polypeptide: LexA repressor (222 aa).

The segment at residues 28 to 48 is a DNA-binding region (H-T-H motif); it reads IREIGEHMDIRSTNGVNDHLK. Catalysis depends on for autocatalytic cleavage activity residues S135 and K172.

Belongs to the peptidase S24 family. In terms of assembly, homodimer.

The catalysed reaction is Hydrolysis of Ala-|-Gly bond in repressor LexA.. Its function is as follows. Represses a number of genes involved in the response to DNA damage (SOS response), including recA and lexA. In the presence of single-stranded DNA, RecA interacts with LexA causing an autocatalytic cleavage which disrupts the DNA-binding part of LexA, leading to derepression of the SOS regulon and eventually DNA repair. The sequence is that of LexA repressor from Myxococcus xanthus (strain DK1622).